The primary structure comprises 240 residues: Ribonuclease PH (240 aa).

Phosphate is bound by residues R86 and 124–126 (GTR).

This sequence belongs to the RNase PH family. As to quaternary structure, homohexameric ring arranged as a trimer of dimers.

It catalyses the reaction tRNA(n+1) + phosphate = tRNA(n) + a ribonucleoside 5'-diphosphate. Its function is as follows. Phosphorolytic 3'-5' exoribonuclease that plays an important role in tRNA 3'-end maturation. Removes nucleotide residues following the 3'-CCA terminus of tRNAs; can also add nucleotides to the ends of RNA molecules by using nucleoside diphosphates as substrates, but this may not be physiologically important. Probably plays a role in initiation of 16S rRNA degradation (leading to ribosome degradation) during starvation. The polypeptide is Ribonuclease PH (Mannheimia succiniciproducens (strain KCTC 0769BP / MBEL55E)).